We begin with the raw amino-acid sequence, 273 residues long: Tryptophan synthase alpha chain (273 aa).

Catalysis depends on proton acceptor residues Glu-49 and Asp-60.

It belongs to the TrpA family. In terms of assembly, tetramer of two alpha and two beta chains.

The enzyme catalyses (1S,2R)-1-C-(indol-3-yl)glycerol 3-phosphate + L-serine = D-glyceraldehyde 3-phosphate + L-tryptophan + H2O. It functions in the pathway amino-acid biosynthesis; L-tryptophan biosynthesis; L-tryptophan from chorismate: step 5/5. In terms of biological role, the alpha subunit is responsible for the aldol cleavage of indoleglycerol phosphate to indole and glyceraldehyde 3-phosphate. This is Tryptophan synthase alpha chain from Thiobacillus denitrificans (strain ATCC 25259 / T1).